The primary structure comprises 444 residues: Tubulin beta-2 chain (444 aa).

GTP contacts are provided by Q11, E69, S138, G142, T143, G144, N204, and N226. E69 serves as a coordination point for Mg(2+).

The protein belongs to the tubulin family. Dimer of alpha and beta chains. A typical microtubule is a hollow water-filled tube with an outer diameter of 25 nm and an inner diameter of 15 nM. Alpha-beta heterodimers associate head-to-tail to form protofilaments running lengthwise along the microtubule wall with the beta-tubulin subunit facing the microtubule plus end conferring a structural polarity. Microtubules usually have 13 protofilaments but different protofilament numbers can be found in some organisms and specialized cells. It depends on Mg(2+) as a cofactor.

It is found in the cytoplasm. Its subcellular location is the cytoskeleton. Its function is as follows. Tubulin is the major constituent of microtubules, a cylinder consisting of laterally associated linear protofilaments composed of alpha- and beta-tubulin heterodimers. Microtubules grow by the addition of GTP-tubulin dimers to the microtubule end, where a stabilizing cap forms. Below the cap, tubulin dimers are in GDP-bound state, owing to GTPase activity of alpha-tubulin. This chain is Tubulin beta-2 chain (TUBB2), found in Zea mays (Maize).